An 876-amino-acid chain; its full sequence is Alanine--tRNA ligase (876 aa).

The segment at 2-461 is catalytic; that stretch reads SKSTAEIRQA…VDSASEFKGY (460 aa). Lys74 bears the N6-acetyllysine mark. Positions 553–705 are editing; it reads DEARRARIRL…EAVTGEGAIA (153 aa). Zn(2+) contacts are provided by His564, His568, Cys666, and His670. The important for oligomerization stretch occupies residues 699–808; sequence TGEGAIATVH…STIIVLATVV (110 aa). The interval 766 to 875 is C-Ala domain; it reads IDVNGVKLLV…SVKGWVSAKL (110 aa).

This sequence belongs to the class-II aminoacyl-tRNA synthetase family. In terms of assembly, homotetramer. It depends on Zn(2+) as a cofactor.

The protein resides in the cytoplasm. It catalyses the reaction tRNA(Ala) + L-alanine + ATP = L-alanyl-tRNA(Ala) + AMP + diphosphate. The enzyme catalyses (S)-lactate + ATP + H(+) = (S)-lactoyl-AMP + diphosphate. The catalysed reaction is (S)-lactoyl-AMP + L-lysyl-[protein] = N(6)-[(S)-lactoyl]-L-lysyl-[protein] + AMP + 2 H(+). Acetylation at Lys-74 decreases the alanylation activity for tRNA(Ala); a protein that is fully acetylated is inactive in vitro. Catalyzes the attachment of L-alanine to tRNA(Ala) in a two-step reaction: L-alanine is first activated by ATP to form Ala-AMP and then transferred to the acceptor end of tRNA(Ala). AlaRS also incorrectly activates the sterically smaller amino acid glycine as well as the sterically larger amino acid L-serine; generates 2-fold more mischarged Gly than Ser. These mischarged amino acids occur because the of inherent physicochemical limitations on discrimination between closely related amino acids (Ala, Gly and Ser) in the charging step. In presence of high levels of lactate, also acts as a protein lactyltransferase that mediates lactylation of lysine residues in target proteins. Its function is as follows. Edits mischarged Ser-tRNA(Ala) and Gly-tRNA(Ala) but not incorrectly charged Ser-tRNA(Thr). Dtd edits Gly-tRNA(Ala) 4-fold better than does AlaRS. Functionally, attaches Ala to transfer-messenger RNA (tmRNA, also known as 10Sa RNA, the product of the ssrA gene). tmRNA plays a major role in rescue of stalled ribosomes via trans-translation. In Escherichia coli (strain K12), this protein is Alanine--tRNA ligase (alaS).